A 144-amino-acid chain; its full sequence is Large ribosomal subunit protein uL14 (144 aa).

The protein belongs to the universal ribosomal protein uL14 family. Part of the 50S ribosomal subunit. Forms a cluster with proteins L3 and L24e, part of which may contact the 16S rRNA in 2 intersubunit bridges.

Binds to 23S rRNA. Forms part of two intersubunit bridges in the 70S ribosome. This Pyrobaculum aerophilum (strain ATCC 51768 / DSM 7523 / JCM 9630 / CIP 104966 / NBRC 100827 / IM2) protein is Large ribosomal subunit protein uL14.